A 433-amino-acid chain; its full sequence is uncharacterized protein (433 aa).

The Radical SAM core domain maps to Glu104–Glu349. Positions 118, 122, and 125 each coordinate [4Fe-4S] cluster. Residues Gly171–Glu172 and Met236–Ser238 contribute to the S-adenosyl-L-methionine site. The 64-residue stretch at Pro370 to Val433 folds into the TRAM domain.

It belongs to the radical SAM superfamily. It depends on [4Fe-4S] cluster as a cofactor.

This is an uncharacterized protein from Methanocaldococcus jannaschii (strain ATCC 43067 / DSM 2661 / JAL-1 / JCM 10045 / NBRC 100440) (Methanococcus jannaschii).